We begin with the raw amino-acid sequence, 92 residues long: Small ribosomal subunit protein uS19c (92 aa).

It belongs to the universal ribosomal protein uS19 family.

The protein resides in the plastid. The protein localises to the chloroplast. Its function is as follows. Protein S19 forms a complex with S13 that binds strongly to the 16S ribosomal RNA. This is Small ribosomal subunit protein uS19c from Phaseolus angularis (Azuki bean).